Consider the following 310-residue polypeptide: Tagatose-6-phosphate kinase (310 aa).

Belongs to the carbohydrate kinase PfkB family. LacC subfamily.

The enzyme catalyses D-tagatofuranose 6-phosphate + ATP = D-tagatofuranose 1,6-bisphosphate + ADP + H(+). Its pathway is carbohydrate metabolism; D-tagatose 6-phosphate degradation; D-glyceraldehyde 3-phosphate and glycerone phosphate from D-tagatose 6-phosphate: step 1/2. The protein is Tagatose-6-phosphate kinase of Staphylococcus aureus (strain bovine RF122 / ET3-1).